Reading from the N-terminus, the 1173-residue chain is Eukaryotic translation initiation factor 3 subunit A (1173 aa).

One can recognise a PCI domain in the interval 319–502; the sequence is LQRMAAHVLL…NSIYFGTDLT (184 aa). Disordered regions lie at residues 589–613 and 836–1173; these read QNNA…LAEQ and AAEA…PVQL. Basic and acidic residues-rich tracts occupy residues 836–900, 925–1011, 1028–1081, and 1090–1125; these read AAEA…RGGD, DRNE…EPDS, SRDD…DAAP, and DAPR…RAPK. Residues 1128-1142 are compositionally biased toward gly residues; that stretch reads GPSGGTGTAAGGGGN. Over residues 1149 to 1165 the composition is skewed to basic and acidic residues; sequence PRDEPAPKRDQPQDKGK.

Belongs to the eIF-3 subunit A family. In terms of assembly, component of the eukaryotic translation initiation factor 3 (eIF-3) complex. The eIF-3 complex interacts with pix.

The protein localises to the cytoplasm. Its function is as follows. RNA-binding component of the eukaryotic translation initiation factor 3 (eIF-3) complex, which is involved in protein synthesis of a specialized repertoire of mRNAs and, together with other initiation factors, stimulates binding of mRNA and methionyl-tRNAi to the 40S ribosome. The eIF-3 complex specifically targets and initiates translation of a subset of mRNAs involved in cell proliferation. In Drosophila persimilis (Fruit fly), this protein is Eukaryotic translation initiation factor 3 subunit A.